We begin with the raw amino-acid sequence, 783 residues long: DNA repair and recombination protein RAD54-like (783 aa).

Residues 2–9 (RRSLAPSQ) form a required for chromatin remodeling, strand pairing activities and coupling of ATPase activity region. T22 is subject to Phosphothreonine. The region spanning 165–340 (EGKRGNFNGC…FSLVNFVNPE (176 aa)) is the Helicase ATP-binding domain. 178–185 (DEMGLGKT) is a binding site for ATP. Residues 291–294 (DEGH) carry the DEGH box motif. The 158-residue stretch at 497 to 654 (LLDFMLAAIR…NNESSEKHFT (158 aa)) folds into the Helicase C-terminal domain. Positions 737 to 783 (AESKPAAITEDDESEQQQQSPKRTSKNDDNDEDFDPENSAEEQFLGF) are disordered. Residues 765–776 (DNDEDFDPENSA) show a composition bias toward acidic residues.

It belongs to the SNF2/RAD54 helicase family. Interacts (via N-terminus) with spn-A/Rad51.

The protein localises to the nucleus. Its function is as follows. Involved in mitotic DNA repair and meiotic recombination. Functions in the recombinational DNA repair pathway. Essential for interhomolog gene conversion (GC), but may have a less important role in intersister GC than spn-A/Rad51. In the presence of DNA, spn-A/Rad51 enhances the ATPase activity of okr/Rad54. This Drosophila mojavensis (Fruit fly) protein is DNA repair and recombination protein RAD54-like.